Reading from the N-terminus, the 339-residue chain is Serpentine receptor class alpha-20 (339 aa).

Helical transmembrane passes span 30–50 (VSFV…VLAI), 113–132 (LYFY…SLTF), 151–171 (VSIS…YFGL), 199–219 (FRTT…YLNV), 249–269 (CILI…VNYI), and 284–304 (IAPF…VIYF).

The protein belongs to the nematode receptor-like protein sra family.

The protein localises to the membrane. The sequence is that of Serpentine receptor class alpha-20 (sra-20) from Caenorhabditis elegans.